The sequence spans 461 residues: Protein transport protein HofB homolog (461 aa).

Position 222-229 (222-229) interacts with ATP; it reads GPTGSGKT.

This sequence belongs to the GSP E family.

The sequence is that of Protein transport protein HofB homolog (hofB) from Escherichia coli (strain K12).